We begin with the raw amino-acid sequence, 289 residues long: ATP synthase subunit a (289 aa).

A run of 6 helical transmembrane segments spans residues 43–63 (AFHLDTLGWSVALGLIFVLIF), 104–124 (IAPLALTIFVWVFLMNAVDLI), 160–180 (LSVFALIIFYSIKVKGIGGFI), 193–213 (IFVQALLIPVNFLLEFVTLIA), 232–252 (VFILIAVMFGSGLLWLSGLGV), and 259–279 (AVFHILIITLQAFIFMMLTIV).

It belongs to the ATPase A chain family. As to quaternary structure, F-type ATPases have 2 components, CF(1) - the catalytic core - and CF(0) - the membrane proton channel. CF(1) has five subunits: alpha(3), beta(3), gamma(1), delta(1), epsilon(1). CF(0) has three main subunits: a(1), b(2) and c(9-12). The alpha and beta chains form an alternating ring which encloses part of the gamma chain. CF(1) is attached to CF(0) by a central stalk formed by the gamma and epsilon chains, while a peripheral stalk is formed by the delta and b chains.

It localises to the cell inner membrane. In terms of biological role, key component of the proton channel; it plays a direct role in the translocation of protons across the membrane. The protein is ATP synthase subunit a of Pseudomonas fluorescens (strain SBW25).